The chain runs to 579 residues: Glypican-2 (579 aa).

The first 21 residues, 1–21, serve as a signal peptide directing secretion; sequence MSALRPLLLLLLHLCPGLGPG. O-linked (Xyl...) (heparan sulfate) serine glycosylation is found at S55, S92, and S155. 2 disordered regions span residues 347 to 382 and 483 to 552; these read GTPH…PTTA and ALGQ…GRSR. Residues 361–379 are compositionally biased toward basic and acidic residues; it reads APREEASRSWRASAEEERP. Residues S498 and S500 are each glycosylated (O-linked (Xyl...) (heparan sulfate) serine). A compositionally biased stretch (pro residues) spans 517–527; it reads VVPPARPPRPP. The GPI-anchor amidated serine moiety is linked to residue S556. The propeptide at 557–579 is removed in mature form; that stretch reads SVGLHTPLVLLLLPSALTLLVLR.

The protein belongs to the glypican family. Interacts (via heparan sulfate) with PTN; this interaction promotes neurite outgrowth through binding of PTN with chondroitin sulfate of proteoglycans, thereby releasing PTPRS of chondroitin sulfate proteoglycans (CSPGs) and leading to binding with heparan sulfate of GPC2. Interacts (heparan sulfate chain) with MDK; this interaction is inhibited by heparin followed by chondroitin sulfate E; this interaction induces GPC2 clustering through heparan sulfate chain; this interaction induces neuronal cell adhesion and neurite outgrowth.

Its subcellular location is the cell membrane. It is found in the secreted. The protein localises to the extracellular space. In terms of biological role, cell surface proteoglycan that bears heparan sulfate. May fulfill a function related to the motile behaviors of developing neurons. In Mus musculus (Mouse), this protein is Glypican-2 (Gpc2).